Here is a 200-residue protein sequence, read N- to C-terminus: Interleukin 17-like protein (200 aa).

Positions 1 to 26 (MGNFFLFAMTLVVCSVIVLLTGVADS) are cleaved as a signal peptide. Asparagine 46 carries N-linked (GlcNAc...) asparagine glycosylation. Cystine bridges form between cysteine 122-cysteine 175 and cysteine 127-cysteine 177. N-linked (GlcNAc...) asparagine glycosylation is present at asparagine 192.

This sequence belongs to the IL-17 family. As to expression, expressed in several tissues including hemocytes, gills, mantle, adductor muscle, labial palps, digestive glands and heart with highest levels in gills and lowest levels in adductor muscle and heart.

Its subcellular location is the secreted. The protein is Interleukin 17-like protein of Magallana gigas (Pacific oyster).